A 286-amino-acid chain; its full sequence is ATP synthase gamma chain (286 aa).

The protein belongs to the ATPase gamma chain family. As to quaternary structure, F-type ATPases have 2 components, CF(1) - the catalytic core - and CF(0) - the membrane proton channel. CF(1) has five subunits: alpha(3), beta(3), gamma(1), delta(1), epsilon(1). CF(0) has three main subunits: a, b and c.

It localises to the cell inner membrane. Produces ATP from ADP in the presence of a proton gradient across the membrane. The gamma chain is believed to be important in regulating ATPase activity and the flow of protons through the CF(0) complex. The sequence is that of ATP synthase gamma chain from Shewanella sp. (strain MR-4).